Consider the following 384-residue polypeptide: PqqA peptide cyclase (384 aa).

A Radical SAM core domain is found at 5-220 (VGLPLWLLAE…TNEYREKLKA (216 aa)). Positions 19, 23, and 26 each coordinate [4Fe-4S] cluster.

This sequence belongs to the radical SAM superfamily. PqqE family. As to quaternary structure, interacts with PqqD. The interaction is necessary for activity of PqqE. It depends on [4Fe-4S] cluster as a cofactor.

It catalyses the reaction [PQQ precursor protein] + S-adenosyl-L-methionine = E-Y cross-linked-[PQQ precursor protein] + 5'-deoxyadenosine + L-methionine + H(+). It functions in the pathway cofactor biosynthesis; pyrroloquinoline quinone biosynthesis. Catalyzes the cross-linking of a glutamate residue and a tyrosine residue in the PqqA protein as part of the biosynthesis of pyrroloquinoline quinone (PQQ). This chain is PqqA peptide cyclase, found in Acinetobacter baumannii (strain AB0057).